A 365-amino-acid polypeptide reads, in one-letter code: 3-dehydroquinate synthase (365 aa).

Residues 106 to 110, 130 to 131, Lys-142, Lys-151, and 169 to 172 each bind NAD(+); these read GVIGD, TT, and FFAT. 3 residues coordinate Zn(2+): Glu-184, His-247, and His-264.

The protein belongs to the sugar phosphate cyclases superfamily. Dehydroquinate synthase family. The cofactor is NAD(+). Co(2+) is required as a cofactor. Requires Zn(2+) as cofactor.

The protein localises to the cytoplasm. It catalyses the reaction 7-phospho-2-dehydro-3-deoxy-D-arabino-heptonate = 3-dehydroquinate + phosphate. Its pathway is metabolic intermediate biosynthesis; chorismate biosynthesis; chorismate from D-erythrose 4-phosphate and phosphoenolpyruvate: step 2/7. In terms of biological role, catalyzes the conversion of 3-deoxy-D-arabino-heptulosonate 7-phosphate (DAHP) to dehydroquinate (DHQ). This chain is 3-dehydroquinate synthase, found in Listeria innocua serovar 6a (strain ATCC BAA-680 / CLIP 11262).